A 407-amino-acid chain; its full sequence is MQIVRSCNSNNKPLIPSSNWHIAIRMRGDGVKDRSIDVLSLKHFESQKVVLPQDLFMDNFTWMFYEFFKCFTFRTWLLLLLLMWLPGFLSQIKSINRIFPFKLCILVSCLVGIFLPNIYSFSHKSVLTNQLTQFSKEIVEHAPGTDTHDWETVAANLNSYFYENKAWNTEYFFFNAAECQKAFRKVLLEPFSVKKDESSKIKSFGDSVPYIEEALQVYSTEFDKKWKLFNTEKVWSPDNLEHVQLPKKTYRYKFTWVLKRIFNLWLFPAFILFLACIYVSWDKGHLFRILCCGGGFLLMVRVFQNMRPFSMHMEDKMQFLSTIINEQESGANGWDEIAKKMNRYLFEKKVWTSEEFFFDGIDCEWFFNHFFYRLLSTKKPMFDRPLNVELWPYIKEAQLTRKQAPPV.

3 helical membrane passes run 75–95 (TWLL…IKSI), 98–118 (IFPF…LPNI), and 261–281 (IFNL…YVSW).

It belongs to the DUP/COS family.

The protein resides in the membrane. The chain is Protein COS9 (COS9) from Saccharomyces cerevisiae (strain ATCC 204508 / S288c) (Baker's yeast).